Consider the following 198-residue polypeptide: Recombination protein RecR (198 aa).

The segment at 57–72 (CSECQTLTDKDPCAVC) adopts a C4-type zinc-finger fold. The region spanning 80–175 (RIICVVEGVP…KVTRIAQGIP (96 aa)) is the Toprim domain.

This sequence belongs to the RecR family.

May play a role in DNA repair. It seems to be involved in an RecBC-independent recombinational process of DNA repair. It may act with RecF and RecO. The protein is Recombination protein RecR of Anaeromyxobacter sp. (strain Fw109-5).